The sequence spans 255 residues: Triosephosphate isomerase (255 aa).

9 to 11 (NWK) is a substrate binding site. The Electrophile role is filled by His100. The Proton acceptor role is filled by Glu169. Residues Gly175, Ser208, and 229 to 230 (GG) contribute to the substrate site.

The protein belongs to the triosephosphate isomerase family. Homodimer.

The protein resides in the cytoplasm. It catalyses the reaction D-glyceraldehyde 3-phosphate = dihydroxyacetone phosphate. Its pathway is carbohydrate biosynthesis; gluconeogenesis. It functions in the pathway carbohydrate degradation; glycolysis; D-glyceraldehyde 3-phosphate from glycerone phosphate: step 1/1. Its function is as follows. Involved in the gluconeogenesis. Catalyzes stereospecifically the conversion of dihydroxyacetone phosphate (DHAP) to D-glyceraldehyde-3-phosphate (G3P). In Synechococcus sp. (strain JA-3-3Ab) (Cyanobacteria bacterium Yellowstone A-Prime), this protein is Triosephosphate isomerase.